The primary structure comprises 1067 residues: SURP and G-patch domain-containing protein 2 (1067 aa).

Position 93 is a phosphoserine (S93). Residues 177–189 show a composition bias toward basic and acidic residues; the sequence is KESRDYDLDHPGE. The disordered stretch occupies residues 177 to 199; it reads KESRDYDLDHPGEVDSVSRSSGQ. S206 bears the Phosphoserine mark. Residue K219 forms a Glycyl lysine isopeptide (Lys-Gly) (interchain with G-Cter in SUMO2) linkage. T265 carries the phosphothreonine modification. Residues S267 and S586 each carry the phosphoserine modification. The stretch at 573 to 616 is one SURP motif 1 repeat; it reads IDQLVMRVIQGRLSPRERTLLLQDPAYWFLSDESSLEYKYYKLK. Residues 668 to 767 form a disordered region; that stretch reads SQGPRGLKAK…CPSANMDAKT (100 aa). Polar residues predominate over residues 680-691; sequence TTAQQTSLSSGT. S740 is modified (phosphoserine). At T744 the chain carries Phosphothreonine. The stretch at 770–813 is one SURP motif 2 repeat; it reads TAEKLARFVAQVGPEIEQFSIENSTDNPDLWFLHDQSSSAFKFY. A compositionally biased stretch (polar residues) spans 825–840; sequence SFQSTGEAGDSVQSPT. Disordered stretches follow at residues 825-944 and 967-991; these read SFQS…KSLK and RIAY…EFSQ. A Phosphoserine modification is found at S838. Over residues 843–856 the composition is skewed to basic and acidic residues; it reads KEGKGEPQEGHPEQ. The span at 866–883 shows a compositional bias: acidic residues; that stretch reads LPEEEEEDEEESEDEGGE. The span at 919–931 shows a compositional bias: polar residues; it reads ASTPGLSQASSGS. Basic residues predominate over residues 975–984; the sequence is GRPIAKKKKP. Positions 980–985 match the Nuclear localization signal motif; the sequence is KKKKPK. Residues 996 to 1042 form the G-patch domain; it reads DKNVGFQMLQKMGWKEGHGLGSLGKGIREPVSVGALSEGEGLGADGP.

It is found in the nucleus. May play a role in mRNA splicing. The sequence is that of SURP and G-patch domain-containing protein 2 (Sugp2) from Mus musculus (Mouse).